Here is a 147-residue protein sequence, read N- to C-terminus: Hemoglobin subunit beta-2 (147 aa).

The Globin domain maps to 3-147; it reads HWTAEEKATI…LVAALSHGYF (145 aa). 2 residues coordinate heme b: histidine 64 and histidine 93.

The protein belongs to the globin family. In terms of assembly, heterotetramer of two alpha chains and two beta chains. As to expression, red blood cells.

In terms of biological role, this is a larval (tadpole) beta-globin. The polypeptide is Hemoglobin subunit beta-2 (hbb2) (Xenopus tropicalis (Western clawed frog)).